Here is a 2126-residue protein sequence, read N- to C-terminus: Phthioceranic/hydroxyphthioceranic acid synthase (2126 aa).

Positions 24–447 (VTPVAVIGMA…GTNVHAVVEQ (424 aa)) constitute a Ketosynthase family 3 (KS3) domain. Catalysis depends on Cys196, which acts as the Acyl-thioester intermediate; for beta-ketoacyl synthase activity. Residues His331 and His367 each act as for beta-ketoacyl synthase activity in the active site. Residues 449–549 (PQTEAQPHAA…VYQPAVGQDD (101 aa)) form a linker domain (LD) region. The interval 550–849 (RGPVWLFSGQ…VAALAGMRRE (300 aa)) is acyltransferase (AT). Residue Ser641 is the Acyl-ester intermediate; for acyltransferase activity of the active site. Positions 909–1191 (STVAVHPLLG…LAVCGLRIGT (283 aa)) are dehydratase (DH). The segment at 914 to 1032 (HPLLGAHVRL…RRASAVLQQV (119 aa)) is N-terminal hotdog fold. The region spanning 914–1198 (HPLLGAHVRL…IGTGVSERDK (285 aa)) is the PKS/mFAS DH domain. Catalysis depends on His947, which acts as the Proton acceptor; for dehydratase activity. The interval 1051-1198 (PCRVDGEDLR…IGTGVSERDK (148 aa)) is C-terminal hotdog fold. Asp1115 (proton donor; for dehydratase activity) is an active-site residue. The pseudo beta-ketoacyl reductase (PsiKR) stretch occupies residues 1227 to 1398 (KWLLISDCAA…SEEDETAWRD (172 aa)). The enoylreductase (ER) stretch occupies residues 1426–1750 (SGMRLQIRTP…EHTGKLVLHI (325 aa)). The interval 1772 to 2019 (GSYIITGGLG…AERSRFFEVF (248 aa)) is beta-ketoacyl reductase (KR). NADP(+) contacts are provided by residues 1780-1783 (LGGL), 1803-1806 (SRTQ), 1831-1832 (DI), and 1904-1905 (FS). The Carrier domain occupies 2040–2126 (DEWPARLRQL…DAPAAALSSQ (87 aa)). Residue Ser2075 is modified to O-(pantetheine 4'-phosphoryl)serine.

Pantetheine 4'-phosphate is required as a cofactor.

The catalysed reaction is hexadecanoyl-[(hydroxy)phthioceranic acid synthase] + 7 (S)-methylmalonyl-CoA + 14 NADPH + 21 H(+) = C37-phthioceranyl-[(hydroxy)phthioceranic acid synthase] + 7 CO2 + 14 NADP(+) + 7 CoA + 7 H2O. It carries out the reaction hexadecanoyl-[(hydroxy)phthioceranic acid synthase] + 8 (S)-methylmalonyl-CoA + 16 NADPH + 24 H(+) = C40-phthioceranyl-[(hydroxy)phthioceranic acid synthase] + 8 CO2 + 16 NADP(+) + 8 CoA + 8 H2O. The chain is Phthioceranic/hydroxyphthioceranic acid synthase (pks2) from Mycobacterium bovis (strain BCG / Pasteur 1173P2).